Here is a 384-residue protein sequence, read N- to C-terminus: Mannitol-1-phosphate 5-dehydrogenase (384 aa).

3–14 (AVHFGAGNIGRG) is a binding site for NAD(+).

Belongs to the mannitol dehydrogenase family. Monomer.

The enzyme catalyses D-mannitol 1-phosphate + NAD(+) = beta-D-fructose 6-phosphate + NADH + H(+). In Enterococcus faecalis (strain ATCC 700802 / V583), this protein is Mannitol-1-phosphate 5-dehydrogenase (mtlD).